Reading from the N-terminus, the 243-residue chain is Homeobox protein goosecoid isoform B (243 aa).

Residues 148–207 (KRRHRTIFTDEQLEALENLFQETKYPDVGTREQLARRVHLREEKVEVWFKNRRAKWRRQK) constitute a DNA-binding region (homeobox). The segment at 201-243 (AKWRRQKRSSSEESENAQKWNKSSKNSAEKRDEQAKSDLDSDS) is disordered. The segment covering 217 to 226 (AQKWNKSSKN) has biased composition (polar residues). Basic and acidic residues predominate over residues 227–243 (SAEKRDEQAKSDLDSDS).

The protein belongs to the paired homeobox family. Bicoid subfamily.

Its subcellular location is the nucleus. Its function is as follows. Plays a central role in executing Spemann's organizer phenomenon (the dorsal blastopore lip of the early Xenopus laevis gastrula can organize a complete secondary body axis when transplanted to another embryo). This Xenopus laevis (African clawed frog) protein is Homeobox protein goosecoid isoform B (gsc-b).